We begin with the raw amino-acid sequence, 348 residues long: Phenylalanine--tRNA ligase alpha subunit (348 aa).

Glutamate 259 provides a ligand contact to Mg(2+).

It belongs to the class-II aminoacyl-tRNA synthetase family. Phe-tRNA synthetase alpha subunit type 1 subfamily. Tetramer of two alpha and two beta subunits. Requires Mg(2+) as cofactor.

The protein localises to the cytoplasm. It carries out the reaction tRNA(Phe) + L-phenylalanine + ATP = L-phenylalanyl-tRNA(Phe) + AMP + diphosphate + H(+). This chain is Phenylalanine--tRNA ligase alpha subunit, found in Lacticaseibacillus paracasei (strain ATCC 334 / BCRC 17002 / CCUG 31169 / CIP 107868 / KCTC 3260 / NRRL B-441) (Lactobacillus paracasei).